The chain runs to 206 residues: Large ribosomal subunit protein uL4 (206 aa).

A disordered region spans residues 47-76 (GTQSAKTRAEVSGGGIKPWRQKGTGRARQG).

Belongs to the universal ribosomal protein uL4 family. As to quaternary structure, part of the 50S ribosomal subunit.

In terms of biological role, one of the primary rRNA binding proteins, this protein initially binds near the 5'-end of the 23S rRNA. It is important during the early stages of 50S assembly. It makes multiple contacts with different domains of the 23S rRNA in the assembled 50S subunit and ribosome. Its function is as follows. Forms part of the polypeptide exit tunnel. This chain is Large ribosomal subunit protein uL4, found in Clostridium botulinum (strain Okra / Type B1).